Here is a 121-residue protein sequence, read N- to C-terminus: SPbeta prophage-derived uncharacterized protein YorW (121 aa).

The sequence is that of SPbeta prophage-derived uncharacterized protein YorW (yorW) from Bacillus subtilis (strain 168).